The primary structure comprises 414 residues: Gamma-glutamyl phosphate reductase (414 aa).

This sequence belongs to the gamma-glutamyl phosphate reductase family.

The protein resides in the cytoplasm. The enzyme catalyses L-glutamate 5-semialdehyde + phosphate + NADP(+) = L-glutamyl 5-phosphate + NADPH + H(+). The protein operates within amino-acid biosynthesis; L-proline biosynthesis; L-glutamate 5-semialdehyde from L-glutamate: step 2/2. Catalyzes the NADPH-dependent reduction of L-glutamate 5-phosphate into L-glutamate 5-semialdehyde and phosphate. The product spontaneously undergoes cyclization to form 1-pyrroline-5-carboxylate. The sequence is that of Gamma-glutamyl phosphate reductase from Xanthomonas campestris pv. campestris (strain ATCC 33913 / DSM 3586 / NCPPB 528 / LMG 568 / P 25).